Reading from the N-terminus, the 104-residue chain is uncharacterized protein (104 aa).

This is an uncharacterized protein from Acidianus two-tailed virus (ATV).